Consider the following 82-residue polypeptide: Cytochrome b559 subunit alpha (82 aa).

The chain crosses the membrane as a helical span at residues 21 to 35; the sequence is VIHSITIPALFIAGW. Heme is bound at residue H23.

The protein belongs to the PsbE/PsbF family. As to quaternary structure, heterodimer of an alpha subunit and a beta subunit. PSII is composed of 1 copy each of membrane proteins PsbA, PsbB, PsbC, PsbD, PsbE, PsbF, PsbH, PsbI, PsbJ, PsbK, PsbL, PsbM, PsbT, PsbX, PsbY, PsbZ, Psb30/Ycf12, peripheral proteins PsbO, CyanoQ (PsbQ), PsbU, PsbV and a large number of cofactors. It forms dimeric complexes. Heme b serves as cofactor.

Its subcellular location is the cellular thylakoid membrane. This b-type cytochrome is tightly associated with the reaction center of photosystem II (PSII). PSII is a light-driven water:plastoquinone oxidoreductase that uses light energy to abstract electrons from H(2)O, generating O(2) and a proton gradient subsequently used for ATP formation. It consists of a core antenna complex that captures photons, and an electron transfer chain that converts photonic excitation into a charge separation. This chain is Cytochrome b559 subunit alpha, found in Nostoc punctiforme (strain ATCC 29133 / PCC 73102).